Reading from the N-terminus, the 259-residue chain is Cell division protein DivIB (259 aa).

Residues 1–27 are Cytoplasmic-facing; that stretch reads MADGKVIDIEQKVPDFREQRRRKSRRR. A helical membrane pass occupies residues 28–45; the sequence is LVLYISILAFFLLFVYYF. The Extracellular segment spans residues 46–259; sequence QSDYSTVGHV…QEEEEIEIEE (214 aa). The POTRA domain maps to 50–118; sequence STVGHVDVYG…RSITLYVDEY (69 aa).

Belongs to the FtsQ/DivIB family. DivIB subfamily.

The protein resides in the cell membrane. Its function is as follows. Cell division protein that may be involved in stabilizing or promoting the assembly of the division complex. The chain is Cell division protein DivIB from Bacillus selenitireducens (strain ATCC 700615 / DSM 15326 / MLS10).